A 297-amino-acid chain; its full sequence is Mitochondrial nicotinamide adenine dinucleotide transporter SLC25A52 (297 aa).

Solcar repeat units follow at residues 28–108 (VGEM…LSCL), 116–200 (PEFA…IKEH), and 209–296 (AHLV…LLKF). 6 consecutive transmembrane segments (helical) span residues 34–51 (YLCGCCAAFNNVAITYPI), 85–105 (LPPLMQKTTTLALMFGLYEDL), 118–138 (FATHGVAAVLAGTAEAIFTPL), 179–199 (ILFRNGLSNVLFFGLRGPIKE), 215–235 (FIGGGLLGAMLGFLCFPINVV), and 268–289 (LFRGAHLNYHRSLISWGIINAT).

The protein belongs to the mitochondrial carrier (TC 2.A.29) family.

It localises to the mitochondrion inner membrane. It catalyses the reaction NAD(+)(in) = NAD(+)(out). In terms of biological role, mitochondrial membrane carrier protein that mediates the import of NAD(+) into mitochondria. Compared to SLC25A51, SLC25A52-mediated transport is not essential for the import of NAD(+) in mitochondria. The transport mechanism, uniport or antiport, its electrogenicity and substrate selectivity, remain to be elucidated. In Homo sapiens (Human), this protein is Mitochondrial nicotinamide adenine dinucleotide transporter SLC25A52.